The chain runs to 74 residues: Conotoxin Bu4 (74 aa).

The N-terminal stretch at 1–22 (MKLTCVVIVAVLLLTACQLIIA) is a signal peptide. A propeptide spanning residues 23 to 45 (EDSRGTQLHRALRKATKLSVSTR) is cleaved from the precursor. 3 cysteine pairs are disulfide-bonded: Cys-47-Cys-63, Cys-54-Cys-66, and Cys-62-Cys-73.

The protein belongs to the conotoxin O1 superfamily. As to expression, expressed by the venom duct.

It localises to the secreted. This is Conotoxin Bu4 from Conus bullatus (Bubble cone).